The following is a 1537-amino-acid chain: DNA-directed RNA polymerase subunit beta' (1537 aa).

Zn(2+) is bound by residues cysteine 57, cysteine 59, cysteine 72, and cysteine 75. Residues aspartate 746, aspartate 748, and aspartate 750 each coordinate Mg(2+). Residues cysteine 1120, cysteine 1201, cysteine 1208, and cysteine 1211 each coordinate Zn(2+). The segment at 1502-1537 is disordered; that stretch reads LEKYGQTSVSTDAVTGSQRYDDTRPSSTSINPSYGD. 2 stretches are compositionally biased toward polar residues: residues 1506–1519 and 1526–1537; these read GQTSVSTDAVTGSQ and PSSTSINPSYGD.

It belongs to the RNA polymerase beta' chain family. As to quaternary structure, the RNAP catalytic core consists of 2 alpha, 1 beta, 1 beta' and 1 omega subunit. When a sigma factor is associated with the core the holoenzyme is formed, which can initiate transcription. The cofactor is Mg(2+). Zn(2+) serves as cofactor.

It carries out the reaction RNA(n) + a ribonucleoside 5'-triphosphate = RNA(n+1) + diphosphate. Functionally, DNA-dependent RNA polymerase catalyzes the transcription of DNA into RNA using the four ribonucleoside triphosphates as substrates. The protein is DNA-directed RNA polymerase subunit beta' of Deinococcus geothermalis (strain DSM 11300 / CIP 105573 / AG-3a).